Consider the following 78-residue polypeptide: Exodeoxyribonuclease 7 small subunit (78 aa).

It belongs to the XseB family. As to quaternary structure, heterooligomer composed of large and small subunits.

It is found in the cytoplasm. The catalysed reaction is Exonucleolytic cleavage in either 5'- to 3'- or 3'- to 5'-direction to yield nucleoside 5'-phosphates.. Functionally, bidirectionally degrades single-stranded DNA into large acid-insoluble oligonucleotides, which are then degraded further into small acid-soluble oligonucleotides. The protein is Exodeoxyribonuclease 7 small subunit of Mycobacterium leprae (strain TN).